Consider the following 187-residue polypeptide: Elongation factor P (187 aa).

The protein belongs to the elongation factor P family.

Its subcellular location is the cytoplasm. The protein operates within protein biosynthesis; polypeptide chain elongation. Involved in peptide bond synthesis. Stimulates efficient translation and peptide-bond synthesis on native or reconstituted 70S ribosomes in vitro. Probably functions indirectly by altering the affinity of the ribosome for aminoacyl-tRNA, thus increasing their reactivity as acceptors for peptidyl transferase. The polypeptide is Elongation factor P (Ruegeria sp. (strain TM1040) (Silicibacter sp.)).